Reading from the N-terminus, the 912-residue chain is Multiple C2 and transmembrane domain-containing protein (912 aa).

The span at 1–33 shows a compositional bias: low complexity; sequence MSRIQYVDQVDQVELDQQQQPGSSSTVSGSTPP. 2 disordered regions span residues 1-80 and 145-165; these read MSRI…KRAK and SSEG…IGGS. Residues 38-49 show a composition bias toward polar residues; it reads PHGSPSLQQSQR. 3 C2 domains span residues 218 to 337, 371 to 493, and 522 to 637; these read QANE…HLQL, RNSK…HLML, and ERYK…TLKD. Ca(2+)-binding residues include aspartate 252, aspartate 258, aspartate 305, aspartate 307, and aspartate 313. Aspartate 553, aspartate 559, aspartate 605, and aspartate 607 together coordinate Ca(2+). The next 2 membrane-spanning stretches (helical) occupy residues 729-749 and 826-846; these read IVAC…LIIL and LTWL…FVPL. A disordered region spans residues 887 to 912; that stretch reads NQYRELPPSAPTDQTRNNPKKKLKGS.

Ca(2+) is required as a cofactor. As to expression, motor neurons (at protein level).

The protein localises to the endoplasmic reticulum membrane. Its function is as follows. Calcium sensor which is essential for the stabilization of normal baseline neurotransmitter release and for the induction and long-term maintenance of presynaptic homeostatic plasticity. The protein is Multiple C2 and transmembrane domain-containing protein of Drosophila melanogaster (Fruit fly).